A 439-amino-acid polypeptide reads, in one-letter code: MSSSREMRDLPLVRLPEPYKTKYELYQASSGPNGRIFQLRLSSDQNNGAISPPDLLHHQMLYFSELIPGPQATLPAESDNTAWARACRSLVSFVTWDGESAPTVGQIWMLVYAIFSLRPSEESFRLSLSGAQKDQLYAECNAAGLSTRFPTPVQPQPLYTTIEDVVVSRAAFWQGAGSPLGTRPAWLVPSISGSARKLPSEYPAFPLQYTLTSQLTNRPVHTQHPVRPAKPARGAPIYSRYIPHLDEFFAMDHLDYTNETHLQLFHTWQNDPRVAVNWKEAGTLDQHREYLRKIDEDPHQIAVLARFNNTYFAYFEIYWAKEDHMGTYYPALDWDRGRHSLVGDARFRGPHRAMAWWTSLIHYIFLDEPRTTCVVGEPKATNGPVLGYDAAHGFHVHKWGDLPHKRSAMVRCERVRFFEVVNFGNVTSNGTAKPSKSKL.

The short motif at 437-439 (SKL) is the PTS1-type peroxisomal targeting signal element.

This sequence belongs to the lysine N-acyltransferase mbtK family.

The protein resides in the peroxisome. Its pathway is siderophore biosynthesis. Functionally, hydroxyornithine transacylase; part of the gene cluster that mediates the biosynthesis of hydroxamate-containing siderophores that play a critical role in virulence via intracellular iron acquisition during macrophage infection. This is Hydroxyornithine transacylase SID3 from Ajellomyces capsulatus (Darling's disease fungus).